The primary structure comprises 216 residues: Thiopurine S-methyltransferase (216 aa).

Residues Trp-11, Leu-46, Glu-67, and Arg-122 each coordinate S-adenosyl-L-methionine.

This sequence belongs to the class I-like SAM-binding methyltransferase superfamily. TPMT family.

It localises to the cytoplasm. It carries out the reaction S-adenosyl-L-methionine + a thiopurine = S-adenosyl-L-homocysteine + a thiopurine S-methylether.. This Vibrio campbellii (strain ATCC BAA-1116) protein is Thiopurine S-methyltransferase.